The chain runs to 160 residues: 2-C-methyl-D-erythritol 2,4-cyclodiphosphate synthase (160 aa).

Positions 11 and 13 each coordinate a divalent metal cation. 4-CDP-2-C-methyl-D-erythritol 2-phosphate is bound by residues 11 to 13 (DVH) and 37 to 38 (HS). His-45 serves as a coordination point for a divalent metal cation. 4-CDP-2-C-methyl-D-erythritol 2-phosphate contacts are provided by residues 59–61 (DIG), 64–68 (FPDTD), 103–109 (AQAPKMA), 135–138 (TTTE), Phe-142, and Arg-145.

The protein belongs to the IspF family. As to quaternary structure, homotrimer. The cofactor is a divalent metal cation.

The catalysed reaction is 4-CDP-2-C-methyl-D-erythritol 2-phosphate = 2-C-methyl-D-erythritol 2,4-cyclic diphosphate + CMP. It participates in isoprenoid biosynthesis; isopentenyl diphosphate biosynthesis via DXP pathway; isopentenyl diphosphate from 1-deoxy-D-xylulose 5-phosphate: step 4/6. Functionally, involved in the biosynthesis of isopentenyl diphosphate (IPP) and dimethylallyl diphosphate (DMAPP), two major building blocks of isoprenoid compounds. Catalyzes the conversion of 4-diphosphocytidyl-2-C-methyl-D-erythritol 2-phosphate (CDP-ME2P) to 2-C-methyl-D-erythritol 2,4-cyclodiphosphate (ME-CPP) with a corresponding release of cytidine 5-monophosphate (CMP). In Thioalkalivibrio sulfidiphilus (strain HL-EbGR7), this protein is 2-C-methyl-D-erythritol 2,4-cyclodiphosphate synthase.